We begin with the raw amino-acid sequence, 676 residues long: Double-stranded RNA-specific editase Adar (676 aa).

The tract at residues 1–51 (MKFDSRVMLNSANNNSPQHPVSAPSDINMNGYNRKLPQKRGYEMPKYSDPK) is disordered. Over residues 8–31 (MLNSANNNSPQHPVSAPSDINMNG) the composition is skewed to polar residues. A compositionally biased stretch (basic and acidic residues) spans 40–51 (RGYEMPKYSDPK). 2 DRBM domains span residues 61–127 (QPKN…SFIQ) and 197–272 (ITVD…SLCN). The A to I editase domain maps to 348–672 (SVSTGTKCVS…LKKPIEQDEF (325 aa)). H372 contacts Zn(2+). E374 acts as the Proton donor in catalysis. Zn(2+)-binding residues include C430 and C493.

In terms of tissue distribution, expressed in embryonic nervous system; late stage 13 sees ventral nerve cord expression which spreads to brain by stage 16. Expression is maintained through to adulthood.

Has A-to-I RNA editing activity on extended dsRNA: edits RNA-binding protein Rnp4F. A-to-I editing of pre-mRNAs acts predominantly through nervous system targets to affect adult nervous system integrity, function and behavior. Essential for adaptation to environmental stresses, such as oxygen deprivation, and for the prevention of premature neuronal degeneration, through the editing of ion channels as targets. In Drosophila melanogaster (Fruit fly), this protein is Double-stranded RNA-specific editase Adar.